Consider the following 440-residue polypeptide: MGPPGSPWQWVTLLLGLLLPPAAPFWLLNVLFPPHTTPKAELSNHTRPVILVPGCLGNQLEAKLDKPDVVNWMCYRKTEDFFTIWLDLNMFLPLGVDCWIDNTRVVYNRSSGLVSNAPGVQIRVPGFGKTYSVEYLDSSKLAGYLHTLVQNLVNNGYVRDETVRAAPYDWRLEPGQQEEYYRKLAGLVEEMHAAYGKPVFLIGHSLGCLHLLYFLLRQPQAWKDRFIDGFISLGAPWGGSIKPMLVLASGDNQGIPIMSSIKLKEEQRITTTSPWMFPSRMAWPEDHVFISTPSFNYTGRDFQRFFADLHFEEGWYMWLQSRDLLAGLPAPGVEVYCLYGVGLPTPRTYIYDHGFPYTDPVGVLYEDGDDTVATRSTELCGLWQGRQPQPVHLLPLHGIQHLNMVFSNLTLEHINAILLGAYRQGPPASPTASPEPPPPE.

Positions 1–24 are cleaved as a signal peptide; it reads MGPPGSPWQWVTLLLGLLLPPAAP. N-linked (GlcNAc...) (complex) asparagine glycosylation occurs at Asn-44. Cysteines 74 and 98 form a disulfide. An N-linked (GlcNAc...) (complex) asparagine glycan is attached at Asn-108. The active-site Nucleophile is Ser-205. Asn-296 is a glycosylation site (N-linked (GlcNAc...) (complex) asparagine). A disulfide bond links Cys-337 and Cys-380. Active-site charge relay system residues include Asp-369 and His-401. Asn-408 carries an N-linked (GlcNAc...) (complex) asparagine glycan. An O-linked (GalNAc...) threonine glycan is attached at Thr-431. Ser-433 is a glycosylation site (O-linked (GalNAc...) serine).

The protein belongs to the AB hydrolase superfamily. Lipase family. In terms of processing, O- and N-glycosylated. O-glycosylation on Thr-431 and Ser-433 consists of sialylated galactose beta 1--&gt;3N-acetylgalactosamine structures. N-glycosylated sites contain sialylated triantennary and/or biantennary complex structures. As to expression, detected in blood plasma. Detected in cerebral spinal fluid (at protein level). Detected in liver. Expressed mainly in brain, liver and testes.

Its subcellular location is the secreted. It carries out the reaction a sterol + a 1,2-diacyl-sn-glycero-3-phosphocholine = a sterol ester + a 1-acyl-sn-glycero-3-phosphocholine. It catalyses the reaction a 1-O-alkyl-2-acetyl-sn-glycero-3-phosphocholine + H2O = a 1-O-alkyl-sn-glycero-3-phosphocholine + acetate + H(+). The catalysed reaction is a 1-hexadecanoyl-2-acyl-sn-glycero-3-phosphocholine + (24S)-hydroxycholesterol = (24S)-24-hydroxycholesterol ester + 1-hexadecanoyl-sn-glycero-3-phosphocholine. The enzyme catalyses (24S)-hydroxycholesterol + 1-hexadecanoyl-2-(9Z,12Z-octadecadienoyl)-sn-glycero-3-phosphocholine = (24S)-hydroxycholesterol 3-linoleoate + 1-hexadecanoyl-sn-glycero-3-phosphocholine. It carries out the reaction 1-hexadecanoyl-2-(5Z,8Z,11Z,14Z-eicosatetraenoyl)-sn-glycero-3-phosphocholine + cholesterol = cholesteryl (5Z,8Z,11Z,14Z)-eicosatetraenoate + 1-hexadecanoyl-sn-glycero-3-phosphocholine. It catalyses the reaction 1-hexadecanoyl-2-(9Z-octadecenoyl)-sn-glycero-3-phosphocholine + cholesterol = cholesteryl (9Z-octadecenoate) + 1-hexadecanoyl-sn-glycero-3-phosphocholine. The catalysed reaction is 1-hexadecanoyl-2-(8Z,11Z,14Z-eicosatrienoyl)-sn-glycero-3-phosphocholine + cholesterol = cholesteryl (8Z,11Z,14Z)-eicosatrienoate + 1-hexadecanoyl-sn-glycero-3-phosphocholine. The enzyme catalyses 1-hexadecanoyl-2-(5Z,8Z,11Z-eicosatrienoyl)-sn-glycero-3-phosphocholine + cholesterol = cholesteryl (5Z,8Z,11Z)-eicosatrienoate + 1-hexadecanoyl-sn-glycero-3-phosphocholine. It carries out the reaction 1-hexadecanoyl-2-(5Z,8Z,11Z,14Z,17Z-eicosapentaenoyl)-sn-glycero-3-phosphocholine + cholesterol = (5Z,8Z,11Z,14Z,17Z-eicosapentaenoyl)-cholesterol + 1-hexadecanoyl-sn-glycero-3-phosphocholine. It catalyses the reaction 1-hexadecanoyl-2-(9Z,12Z-octadecadienoyl)-sn-glycero-3-phosphocholine + cholesterol = cholesteryl (9Z,12Z)-octadecadienoate + 1-hexadecanoyl-sn-glycero-3-phosphocholine. The catalysed reaction is 1-hexadecanoyl-2-(6Z,9Z,12Z-octadecatrienoyl)-sn-glycero-3-phosphocholine + cholesterol = (6Z,9Z,12Z-octadecatrienoyl)-cholesterol + 1-hexadecanoyl-sn-glycero-3-phosphocholine. The enzyme catalyses 1-hexadecanoyl-2-(11Z,14Z,17Z-eicosatrienoyl)-sn-glycero-3-phosphocholine + cholesterol = (11Z,14Z,17Z-eicosatrienoyl)-cholesterol + 1-hexadecanoyl-sn-glycero-3-phosphocholine. It carries out the reaction 1-hexadecanoyl-2-(9Z,12Z,15Z-octadecatrienoyl)-sn-glycero-3-phosphocholine + cholesterol = (9Z,12Z,15Z-octadecatrienoyl)-cholesterol + 1-hexadecanoyl-sn-glycero-3-phosphocholine. It catalyses the reaction 1-hexadecanoyl-2-(9Z,12Z-octadecadienoyl)-sn-glycero-3-phosphocholine + H2O = (9Z,12Z)-octadecadienoate + 1-hexadecanoyl-sn-glycero-3-phosphocholine + H(+). The catalysed reaction is 1-hexadecanoyl-2-(5Z,8Z,11Z,14Z-eicosatetraenoyl)-sn-glycero-3-phosphocholine + H2O = 1-hexadecanoyl-sn-glycero-3-phosphocholine + (5Z,8Z,11Z,14Z)-eicosatetraenoate + H(+). The enzyme catalyses a 1-O-alkyl-2-acetyl-sn-glycero-3-phosphocholine + 1-hexadecanoyl-sn-glycero-3-phosphocholine = 1-hexadecanoyl-2-acetyl-sn-glycero-3-phosphocholine + a 1-O-alkyl-sn-glycero-3-phosphocholine. Its activity is regulated as follows. APOA1 is the most potent activator in plasma. Also activated by APOE, APOC1 and APOA4. Inhibited by haptoglobin and 5,5'-dithiobis-(2-nitrobenzoic acid) (DTNB). In terms of biological role, central enzyme in the extracellular metabolism of plasma lipoproteins. Synthesized mainly in the liver and secreted into plasma where it converts cholesterol and phosphatidylcholines (lecithins) to cholesteryl esters and lysophosphatidylcholines on the surface of high and low density lipoproteins (HDLs and LDLs). The cholesterol ester is then transported back to the liver. Has a preference for plasma 16:0-18:2 or 18:O-18:2 phosphatidylcholines. Also produced in the brain by primary astrocytes, and esterifies free cholesterol on nascent APOE-containing lipoproteins secreted from glia and influences cerebral spinal fluid (CSF) APOE- and APOA1 levels. Together with APOE and the cholesterol transporter ABCA1, plays a key role in the maturation of glial-derived, nascent lipoproteins. Required for remodeling high-density lipoprotein particles into their spherical forms. Catalyzes the hydrolysis of 1-O-alkyl-2-acetyl-sn-glycero-3-phosphocholine (platelet-activating factor or PAF) to 1-O-alkyl-sn-glycero-3-phosphocholine (lyso-PAF). Also catalyzes the transfer of the acetate group from PAF to 1-hexadecanoyl-sn-glycero-3-phosphocholine forming lyso-PAF. Catalyzes the esterification of (24S)-hydroxycholesterol (24(S)OH-C), also known as cerebrosterol to produce 24(S)OH-C monoesters. This chain is Phosphatidylcholine-sterol acyltransferase (LCAT), found in Homo sapiens (Human).